The chain runs to 94 residues: Large ribosomal subunit protein eL42 (94 aa).

The Zn(2+) site is built by Cys11, Cys14, Cys70, and Cys73. The C4-type zinc-finger motif lies at 11-73; it reads CPYCKKHTIH…IDLRFKCTEC (63 aa).

The protein belongs to the eukaryotic ribosomal protein eL42 family. In terms of assembly, part of the 50S ribosomal subunit. Requires Zn(2+) as cofactor.

In terms of biological role, binds to the 23S rRNA. This is Large ribosomal subunit protein eL42 from Methanocaldococcus jannaschii (strain ATCC 43067 / DSM 2661 / JAL-1 / JCM 10045 / NBRC 100440) (Methanococcus jannaschii).